Here is a 402-residue protein sequence, read N- to C-terminus: Probable glutamate 5-kinase (402 aa).

Residues S58, D145, and N157 each contribute to the substrate site. ATP contacts are provided by residues 177–178 (TD) and 218–224 (TGGMKTK). Residues 295–373 (HGSLEIDRGA…KEIASILGYN (79 aa)) form the PUA domain.

The protein belongs to the glutamate 5-kinase family.

The protein localises to the cytoplasm. The catalysed reaction is L-glutamate + ATP = L-glutamyl 5-phosphate + ADP. Its pathway is amino-acid biosynthesis; L-proline biosynthesis; L-glutamate 5-semialdehyde from L-glutamate: step 1/2. Catalyzes the transfer of a phosphate group to glutamate to form glutamate 5-phosphate which rapidly cyclizes to 5-oxoproline. The sequence is that of Probable glutamate 5-kinase from Schizosaccharomyces pombe (strain 972 / ATCC 24843) (Fission yeast).